The following is a 167-amino-acid chain: Insertion element IS1 1 protein InsB (167 aa).

This sequence belongs to the transposase 27 family.

Absolutely required for transposition of IS1. The protein is Insertion element IS1 1 protein InsB (insB1) of Escherichia coli (strain K12).